The chain runs to 341 residues: NADH-quinone oxidoreductase subunit H (341 aa).

The next 8 helical transmembrane spans lie at 38-58 (PSVV…KLLV), 70-90 (ILFI…WAVI), 115-135 (IGVL…IVAG), 161-181 (MGLI…GEMV), 187-207 (MPFW…ISLL), 239-259 (LFFL…TIFF), 275-295 (IPGL…FVWT), and 314-334 (VFLP…LFTG).

It belongs to the complex I subunit 1 family. As to quaternary structure, NDH-1 is composed of 14 different subunits. Subunits NuoA, H, J, K, L, M, N constitute the membrane sector of the complex.

The protein resides in the cell membrane. It carries out the reaction a quinone + NADH + 5 H(+)(in) = a quinol + NAD(+) + 4 H(+)(out). Functionally, NDH-1 shuttles electrons from NADH, via FMN and iron-sulfur (Fe-S) centers, to quinones in the respiratory chain. The immediate electron acceptor for the enzyme in this species is believed to be ubiquinone. Couples the redox reaction to proton translocation (for every two electrons transferred, four hydrogen ions are translocated across the cytoplasmic membrane), and thus conserves the redox energy in a proton gradient. This subunit may bind ubiquinone. The sequence is that of NADH-quinone oxidoreductase subunit H from Wolbachia sp. subsp. Brugia malayi (strain TRS).